Consider the following 315-residue polypeptide: tRNA wybutosine-synthesizing protein 5 (315 aa).

A JmjC domain is found at 102–267 (DEKYYLRSLG…YDKTDTYGNK (166 aa)). Tyr106 contributes to the 2-oxoglutarate binding site. Residues His160 and Asp162 each contribute to the Fe cation site. Positions 166 and 175 each coordinate 2-oxoglutarate. His235 is a Fe cation binding site.

The protein belongs to the TYW5 family. Homodimer. Fe(2+) is required as a cofactor.

The catalysed reaction is 7-[(3S)-3-amino-3-carboxypropyl]wyosine(37) in tRNA(Phe) + 2-oxoglutarate + O2 = 7-(2-hydroxy-3-amino-3-carboxypropyl)wyosine(37) in tRNA(Phe) + succinate + CO2. The protein operates within tRNA modification; wybutosine-tRNA(Phe) biosynthesis. TRNA hydroxylase that acts as a component of the wybutosine biosynthesis pathway. Wybutosine is a hyper modified guanosine with a tricyclic base found at the 3'-position adjacent to the anticodon of eukaryotic phenylalanine tRNA. Catalyzes the hydroxylation of 7-(a-amino-a-carboxypropyl)wyosine (yW-72) into undermodified hydroxywybutosine (OHyW*). OHyW* being further transformed into hydroxywybutosine (OHyW) by LCMT2/TYW4. OHyW is a derivative of wybutosine found in higher eukaryotes. The polypeptide is tRNA wybutosine-synthesizing protein 5 (TYW5) (Homo sapiens (Human)).